The primary structure comprises 56 residues: Large ribosomal subunit protein eL40 (56 aa).

Belongs to the eukaryotic ribosomal protein eL40 family.

The protein is Large ribosomal subunit protein eL40 of Metallosphaera sedula (strain ATCC 51363 / DSM 5348 / JCM 9185 / NBRC 15509 / TH2).